The sequence spans 923 residues: RNA polymerase-associated protein RapA (923 aa).

A Helicase ATP-binding domain is found at 162 to 332 (EVGNRVNPRV…FARLRLLDPE (171 aa)). 175–182 (DEVGLGKT) contributes to the ATP binding site. Residues 278-281 (DEAH) carry the DEAH box motif. A Helicase C-terminal domain is found at 443–597 (KIDWLIDFLK…TCPMGMALFS (155 aa)).

Belongs to the SNF2/RAD54 helicase family. RapA subfamily. As to quaternary structure, interacts with the RNAP. Has a higher affinity for the core RNAP than for the holoenzyme. Its ATPase activity is stimulated by binding to RNAP.

Transcription regulator that activates transcription by stimulating RNA polymerase (RNAP) recycling in case of stress conditions such as supercoiled DNA or high salt concentrations. Probably acts by releasing the RNAP, when it is trapped or immobilized on tightly supercoiled DNA. Does not activate transcription on linear DNA. Probably not involved in DNA repair. This chain is RNA polymerase-associated protein RapA, found in Haemophilus influenzae (strain ATCC 51907 / DSM 11121 / KW20 / Rd).